We begin with the raw amino-acid sequence, 174 residues long: uncharacterized protein (174 aa).

2 stretches are compositionally biased toward basic and acidic residues: residues 1–31 (MDKH…GKEG) and 52–67 (EPPR…ERRS). The interval 1 to 69 (MDKHGVKTPL…GEGRERRSVS (69 aa)) is disordered.

This is an uncharacterized protein from Homo sapiens (Human).